The chain runs to 436 residues: UPF0597 protein YhaM (436 aa).

This sequence belongs to the UPF0597 family.

This is UPF0597 protein YhaM from Shigella dysenteriae serotype 1 (strain Sd197).